We begin with the raw amino-acid sequence, 118 residues long: UPF0295 protein BCE33L0445 (118 aa).

2 consecutive transmembrane segments (helical) span residues 12-32 (IRTFALSLVFIGLFIAYLGVF) and 43-63 (FMMVGFLAVIASTVVYFWIGM).

The protein belongs to the UPF0295 family.

Its subcellular location is the cell membrane. This Bacillus cereus (strain ZK / E33L) protein is UPF0295 protein BCE33L0445.